A 154-amino-acid chain; its full sequence is Proteasome subunit beta type-4 (154 aa).

Methionine 1 is modified (N-acetylmethionine). The propeptide occupies 1–45; the sequence is MESILESRSGHWAGGPAPGQFYRIPPTPGSIVDPXSVLYGSPITR. At tyrosine 102 the chain carries Phosphotyrosine.

Belongs to the peptidase T1B family. In terms of assembly, the 26S proteasome consists of a 20S proteasome core and two 19S regulatory subunits. The 20S proteasome core is a barrel-shaped complex made of 28 subunits that are arranged in four stacked rings. The two outer rings are each formed by seven alpha subunits, and the two inner rings are formed by seven beta subunits. The proteolytic activity is exerted by three beta-subunits PSMB5, PSMB6 and PSMB7. Forms a ternary complex with SMAD1 and OAZ1 before PSMB4 is incorporated into the 20S proteasome. Interacts with PRPF19.

The protein resides in the cytoplasm. It localises to the nucleus. Functionally, non-catalytic component of the 20S core proteasome complex involved in the proteolytic degradation of most intracellular proteins. This complex plays numerous essential roles within the cell by associating with different regulatory particles. Associated with two 19S regulatory particles, forms the 26S proteasome and thus participates in the ATP-dependent degradation of ubiquitinated proteins. The 26S proteasome plays a key role in the maintenance of protein homeostasis by removing misfolded or damaged proteins that could impair cellular functions, and by removing proteins whose functions are no longer required. Associated with the PA200 or PA28, the 20S proteasome mediates ubiquitin-independent protein degradation. This type of proteolysis is required in several pathways including spermatogenesis (20S-PA200 complex) or generation of a subset of MHC class I-presented antigenic peptides (20S-PA28 complex). SMAD1/OAZ1/PSMB4 complex mediates the degradation of the CREBBP/EP300 repressor SNIP1. The protein is Proteasome subunit beta type-4 (PSMB4) of Sus scrofa (Pig).